A 355-amino-acid chain; its full sequence is uncharacterized protein (355 aa).

Helical transmembrane passes span 275–295 (SLIVLQSILAVVFGAGLFVAF), 301–321 (WNSIVALVLSVLVILGLVVGV), and 330–350 (IASTLIAVVVGALITLGPLAL).

This sequence to M.tuberculosis Rv0497.

The protein resides in the cell membrane. This is an uncharacterized protein from Mycobacterium leprae (strain TN).